We begin with the raw amino-acid sequence, 473 residues long: Ribulose bisphosphate carboxylase large chain 3 (473 aa).

Residues Asn-116 and Thr-166 each coordinate substrate. Lys-168 (proton acceptor) is an active-site residue. Lys-170 contacts substrate. Lys-194, Asp-196, and Glu-197 together coordinate Mg(2+). Residue Lys-194 is modified to N6-carboxylysine. His-287 functions as the Proton acceptor in the catalytic mechanism. 3 residues coordinate substrate: Arg-288, His-320, and Ser-372.

It belongs to the RuBisCO large chain family. Type I subfamily. In terms of assembly, heterohexadecamer of 8 large chains and 8 small chains. Mg(2+) is required as a cofactor.

The catalysed reaction is 2 (2R)-3-phosphoglycerate + 2 H(+) = D-ribulose 1,5-bisphosphate + CO2 + H2O. It catalyses the reaction D-ribulose 1,5-bisphosphate + O2 = 2-phosphoglycolate + (2R)-3-phosphoglycerate + 2 H(+). RuBisCO catalyzes two reactions: the carboxylation of D-ribulose 1,5-bisphosphate, the primary event in carbon dioxide fixation, as well as the oxidative fragmentation of the pentose substrate. Both reactions occur simultaneously and in competition at the same active site. The polypeptide is Ribulose bisphosphate carboxylase large chain 3 (Nitrobacter hamburgensis (strain DSM 10229 / NCIMB 13809 / X14)).